A 238-amino-acid polypeptide reads, in one-letter code: Ribitol-5-phosphate cytidylyltransferase 2 (238 aa).

CTP is bound by residues 7–10 (LAGG) and 81–87 (GTDRNET).

This sequence belongs to the IspD/TarI cytidylyltransferase family. TarI subfamily. As to quaternary structure, heterodimer together with TarJ.

It carries out the reaction D-ribitol 5-phosphate + CTP + H(+) = CDP-L-ribitol + diphosphate. It participates in cell wall biogenesis; poly(ribitol phosphate) teichoic acid biosynthesis. Catalyzes the transfer of the cytidylyl group of CTP to D-ribitol 5-phosphate. The protein is Ribitol-5-phosphate cytidylyltransferase 2 of Staphylococcus aureus (strain NCTC 8325 / PS 47).